Here is a 287-residue protein sequence, read N- to C-terminus: Co-chaperone protein DjlA (287 aa).

Over 1–6 the chain is Periplasmic; it reads MQIFGK. A helical membrane pass occupies residues 7–30; that stretch reads ILGAFFGFLFGGVFGALFGLFIGH. At 31–287 the chain is on the cytoplasmic side; the sequence is QFDKARRLSQ…DLIKKEKGFK (257 aa). A disordered region spans residues 192–213; that stretch reads GGFGGQQHQSHHSSSHGGWQQA. A J domain is found at 221 to 287; sequence DAYKILGIDA…DLIKKEKGFK (67 aa).

Homodimer.

It is found in the cell inner membrane. Functionally, regulatory DnaK co-chaperone. Direct interaction between DnaK and DjlA is needed for the induction of the wcaABCDE operon, involved in the synthesis of a colanic acid polysaccharide capsule, possibly through activation of the RcsB/RcsC phosphotransfer signaling pathway. The colanic acid capsule may help the bacterium survive conditions outside the host. This chain is Co-chaperone protein DjlA, found in Vibrio vulnificus (strain CMCP6).